A 152-amino-acid chain; its full sequence is Transcriptional regulator MraZ (152 aa).

2 SpoVT-AbrB domains span residues 5 to 52 (ASAI…PLEA) and 81 to 124 (AHEC…DEAA).

It belongs to the MraZ family. As to quaternary structure, forms oligomers.

It localises to the cytoplasm. It is found in the nucleoid. This is Transcriptional regulator MraZ from Shewanella loihica (strain ATCC BAA-1088 / PV-4).